Here is an 849-residue protein sequence, read N- to C-terminus: ATP-binding cassette sub-family B member 6 (849 aa).

Topologically, residues 1-25 (MVRLGSYCEHNGSISQAWLDSGLSP) are lumenal. A required for the lysosomal targeting region spans residues 1-195 (MVRLGSYCEH…TLFLFVLGIR (195 aa)). Residues 1–227 (MVRLGSYCEH…SQPLLRDPNQ (227 aa)) are required for ATPase activity. Residues Cys8 and Cys26 are joined by a disulfide bond. N-linked (GlcNAc...) asparagine glycosylation is present at Asn11. A helical membrane pass occupies residues 26–46 (CFYFTLVPSVLLSFSFLLGAL). Residues 47–72 (QSALYARHSTTMEPKYIPRSRLYRLQ) lie on the Cytoplasmic side of the membrane. The chain crosses the membrane as a helical span at residues 73–93 (IVLSVVLILQSVIGLIWQAAG). The Lumenal portion of the chain corresponds to 94-98 (TDVVY). A helical transmembrane segment spans residues 99–119 (GYMIVHGCLSVVAWGFSLWLL). The Cytoplasmic segment spans residues 120–136 (HLERTRALVREKSRGHG). Residues 137-157 (VVLLLFWALAFAAENLAFISW) traverse the membrane as a helical segment. The Lumenal portion of the chain corresponds to 158-173 (QSPNWWWLSRDTVPQK). A helical transmembrane segment spans residues 174–194 (VQFGLWITRYVCTLFLFVLGI). Topologically, residues 195-254 (RAPGRPRKPYIVLINEDERDVETSQPLLRDPNQSTWQGFKKKLLLVMQYIWPRRNIPLQL) are cytoplasmic. The chain crosses the membrane as a helical span at residues 255-275 (LVALCMGLMGLERAINVFVPI). The ABC transmembrane type-1 domain occupies 256–547 (VALCMGLMGL…FGTYYRMIQS (292 aa)). Topologically, residues 276 to 291 (YAKKIVDGLTEDSTWN) are lumenal. The chain crosses the membrane as a helical span at residues 292 to 312 (ILAVTVCIYVLLKFLQGGGAG). The Cytoplasmic segment spans residues 313 to 373 (TTGFLSNLRT…VDRGTSSINS (61 aa)). A helical transmembrane segment spans residues 374–394 (LLSYIVFSILPTIADIVIGIV). Topologically, residues 395–401 (YFTSSFN) are lumenal. The helical transmembrane segment at 402 to 422 (AWFGLIIFVCMTLYLTLTIII) threads the bilayer. Topologically, residues 423–492 (TEWRTKYRRE…ASLAMLNQTQ (70 aa)) are cytoplasmic. The chain crosses the membrane as a helical span at residues 493–513 (NLIIGLGLLAGSLLCAYFVTE). Residues 514–520 (NKFKVGD) are Lumenal-facing. The helical transmembrane segment at 521-541 (YVLFGTYIIQLYTPLNWFGTY) threads the bilayer. The Cytoplasmic segment spans residues 542–849 (YRMIQSSFID…PPKATPRRGH (308 aa)). Positions 581–815 (IEFENVHFSY…GGVYAGMWQK (235 aa)) constitute an ABC transporter domain. ATP contacts are provided by residues Tyr590 and 614-625 (GPSGSGKSTIIR). Residues 814–825 (QKQQSGSESSSD) are compositionally biased toward low complexity. Residues 814–849 (QKQQSGSESSSDSDSERKDRTSEKLQPPKATPRRGH) form a disordered region. Residues 827 to 836 (DSERKDRTSE) are compositionally biased toward basic and acidic residues.

The protein belongs to the ABC transporter superfamily. ABCB family. Heavy Metal importer (TC 3.A.1.210) subfamily. Homodimer. In terms of processing, N-glycosylated.

It is found in the cell membrane. Its subcellular location is the mitochondrion outer membrane. The protein localises to the endoplasmic reticulum membrane. The protein resides in the golgi apparatus membrane. It localises to the endosome membrane. It is found in the lysosome membrane. Its subcellular location is the late endosome membrane. The protein localises to the early endosome membrane. The protein resides in the secreted. It localises to the extracellular exosome. It is found in the mitochondrion. Its subcellular location is the endosome. The protein localises to the multivesicular body membrane. The protein resides in the melanosome membrane. It catalyses the reaction heme b(in) + ATP + H2O = heme b(out) + ADP + phosphate + H(+). The catalysed reaction is coproporphyrin III(in) + ATP + H2O = coproporphyrin III(out) + ADP + phosphate + H(+). It carries out the reaction pheophorbide a(in) + ATP + H2O = pheophorbide a(out) + ADP + phosphate + H(+). The enzyme catalyses coproporphyrinogen III(in) + ATP + H2O = coproporphyrinogen III(out) + ADP + phosphate + H(+). It catalyses the reaction protoporphyrin IX(in) + ATP + H2O = protoporphyrin IX(out) + ADP + phosphate + H(+). The catalysed reaction is coproporphyrin I(in) + ATP + H2O = coproporphyrin I(out) + ADP + phosphate + H(+). It carries out the reaction uroporphyrin I(in) + ATP + H2O = uroporphyrin I(out) + ADP + phosphate + H(+). The enzyme catalyses uroporphyrin III(in) + ATP + H2O = uroporphyrin III(out) + ADP + phosphate + H(+). Functionally, ATP-dependent transporter that catalyzes the transport of a broad-spectrum of porphyrins from the cytoplasm to the extracellular space through the plasma membrane or into the vesicle lumen. May also function as an ATP-dependent importer of porphyrins from the cytoplasm into the mitochondria, in turn may participate in the de novo heme biosynthesis regulation and in the coordination of heme and iron homeostasis during phenylhydrazine stress. May also play a key role in the early steps of melanogenesis producing PMEL amyloid fibrils. In vitro, it confers to cells a resistance to toxic metal such as arsenic and cadmium and against chemotherapeutics agent such as 5-fluorouracil, SN-38 and vincristin. In addition may play a role in the transition metal homeostasis. The polypeptide is ATP-binding cassette sub-family B member 6 (abcb6) (Xenopus tropicalis (Western clawed frog)).